Here is a 495-residue protein sequence, read N- to C-terminus: Ectonucleoside triphosphate diphosphohydrolase 2 (495 aa).

The Cytoplasmic portion of the chain corresponds to 1–7 (MAGKVRS). A helical transmembrane segment spans residues 8–28 (LLPPLLLAAAGLAGLLLLCVP). At 29–462 (TRDVREPPAL…PGLRKGTDFS (434 aa)) the chain is on the extracellular side. N-linked (GlcNAc...) asparagine glycosylation occurs at Asn64. Cys75 and Cys99 form a disulfide bridge. Residue Asn129 is glycosylated (N-linked (GlcNAc...) asparagine). Glu165 serves as the catalytic Proton acceptor. Residue 204-208 (GASTQ) coordinates ATP. 4 disulfides stabilise this stretch: Cys242–Cys284, Cys265–Cys310, Cys323–Cys328, and Cys377–Cys399. N-linked (GlcNAc...) asparagine glycosylation is present at Asn294. N-linked (GlcNAc...) asparagine glycosylation is found at Asn378 and Asn443. Residues 463–483 (SWVVLLLLFASALLAALVLLL) traverse the membrane as a helical segment. Residues 484-495 (RQVHSAKLPSTI) are Cytoplasmic-facing.

This sequence belongs to the GDA1/CD39 NTPase family. It depends on Ca(2+) as a cofactor. Requires Mg(2+) as cofactor. In terms of tissue distribution, brain, placenta, skeletal muscle, kidney, pancreas, heart, ovary, testis, colon, small intestine, prostate and pancreas. No expression in adult thymus, spleen, lung, liver and peripheral blood leukocytes.

Its subcellular location is the cell membrane. The protein resides in the endoplasmic reticulum membrane. In terms of biological role, in the nervous system, could hydrolyze ATP and other nucleotides to regulate purinergic neurotransmission. Hydrolyzes ADP only to a marginal extent. The order of activity with different substrates is ATP &gt; GTP &gt; CTP = ITP &gt; UTP &gt;&gt; ADP = UDP. In Homo sapiens (Human), this protein is Ectonucleoside triphosphate diphosphohydrolase 2 (ENTPD2).